We begin with the raw amino-acid sequence, 382 residues long: Neuropeptide Y receptor type 1 (382 aa).

Residues 1-33 (MNSTLFSRVENYSVHYNVSENSPFLAFENDDCH) are Extracellular-facing. 3 N-linked (GlcNAc...) asparagine glycosylation sites follow: Asn2, Asn11, and Asn17. Residues 34 to 54 (LPLAVIFTLALAYGAVIILGV) traverse the membrane as a helical segment. At 55–75 (SGNLALIIIILKQKEMRNVTN) the chain is on the cytoplasmic side. The helical transmembrane segment at 76-96 (ILIVNLSFSDLLVAVMCLPFT) threads the bilayer. At 97-115 (FVYTLMDHWVFGETMCKLN) the chain is on the extracellular side. Cys112 and Cys197 are oxidised to a cystine. The chain crosses the membrane as a helical span at residues 116-136 (PFVQCVSITVSIFSLVLIAVE). Residues 137–153 (RHQLIINPRGWRPNNRH) lie on the Cytoplasmic side of the membrane. The helical transmembrane segment at 154–174 (AYIGITVIWVLAVASSLPFVI) threads the bilayer. Topologically, residues 175–210 (YQILTDEPFQNVSLAAFKDKYVCFDKFPSDSHRLSY) are extracellular. Residues 211 to 231 (TTLLLVLQYFGPLCFIFICYF) traverse the membrane as a helical segment. Residues 232-259 (KIYIRLKRRNNMMDKIRDSKYRSSETKR) lie on the Cytoplasmic side of the membrane. A helical membrane pass occupies residues 260 to 280 (INVMLLSIVVAFAVCWLPLTI). The Extracellular portion of the chain corresponds to 281 to 298 (FNTVFDWNHQIIATCNHN). Residues 299–319 (LLFLLCHLTAMISTCVNPIFY) form a helical membrane-spanning segment. The Cytoplasmic portion of the chain corresponds to 320–382 (GFLNKNFQRD…KISMNDNEKI (63 aa)). Cys337 carries the S-palmitoyl cysteine lipid modification. Residues Ser367 and Ser375 each carry the phosphoserine modification.

The protein belongs to the G-protein coupled receptor 1 family. As to expression, brain.

The protein localises to the cell membrane. Functionally, receptor for neuropeptide Y and peptide YY. This is Neuropeptide Y receptor type 1 (Npy1r) from Rattus norvegicus (Rat).